The primary structure comprises 386 residues: Heat-inducible transcription repressor HrcA (386 aa).

This sequence belongs to the HrcA family.

Its function is as follows. Negative regulator of class I heat shock genes (grpE-dnaK-dnaJ and groELS operons). Prevents heat-shock induction of these operons. In Chlamydia caviae (strain ATCC VR-813 / DSM 19441 / 03DC25 / GPIC) (Chlamydophila caviae), this protein is Heat-inducible transcription repressor HrcA.